Here is a 242-residue protein sequence, read N- to C-terminus: ATP-dependent dethiobiotin synthetase BioD (242 aa).

12 to 17 provides a ligand contact to ATP; it reads EVGKTV. Residue Thr16 participates in Mg(2+) binding. Residue Lys37 is part of the active site. Residue Ser41 participates in substrate binding. ATP is bound by residues Asp51 and 112–115; that span reads EGAG. Mg(2+) contacts are provided by Asp51 and Glu112.

This sequence belongs to the dethiobiotin synthetase family. As to quaternary structure, homodimer. Requires Mg(2+) as cofactor.

It is found in the cytoplasm. It catalyses the reaction (7R,8S)-7,8-diammoniononanoate + CO2 + ATP = (4R,5S)-dethiobiotin + ADP + phosphate + 3 H(+). The protein operates within cofactor biosynthesis; biotin biosynthesis; biotin from 7,8-diaminononanoate: step 1/2. Catalyzes a mechanistically unusual reaction, the ATP-dependent insertion of CO2 between the N7 and N8 nitrogen atoms of 7,8-diaminopelargonic acid (DAPA, also called 7,8-diammoniononanoate) to form a ureido ring. This chain is ATP-dependent dethiobiotin synthetase BioD, found in Bacillus thuringiensis subsp. konkukian (strain 97-27).